Consider the following 209-residue polypeptide: SelT-like protein (209 aa).

Positions 1–22 (MDKTQLILLGLPIFLLCSDLFN) are cleaved as a signal peptide. Cysteine 64 and cysteine 67 are oxidised to a cystine.

This sequence belongs to the SelWTH family. SELT subfamily.

This Arabidopsis thaliana (Mouse-ear cress) protein is SelT-like protein.